The primary structure comprises 335 residues: MAVYDQSGDRNRTQIDTSRKRKSRSRGDGTTVAERLKRWKEYNETVEEVSTKKRKVPAKGSKKGCMKGKGGPENSRCSFRGVRQRIWGKWVAEIREPNRGSRLWLGTFPTAQEAASAYDEAAKAMYGPLARLNFPRSDASEVTSTSSQSEVCTVETPGCVHVKTEDPDCESKPFSGGVEPMYCLENGAEEMKRGVKADKHWLSEFEHNYWSDILKEKEKQKEQGIVETCQQQQQDSLSVADYGWPNDVDQSHLDSSDMFDVDELLRDLNGDDVFAGLNQDRYPGNSVANGSYRPESQQSGFDPLQSLNYGIPPFQLEGKDGNGFFDDLSYLDLEN.

2 disordered regions span residues Met-1 to Val-32 and Ser-50 to Asn-74. The Nuclear localization signal motif lies at Arg-19 to Lys-55. Residues Lys-52–Met-66 show a composition bias toward basic residues. A DNA-binding region (AP2/ERF) is located at residues Ser-78–Pro-135. The tract at residues Gln-279–Leu-304 is disordered. The span at Ser-286–Leu-304 shows a compositional bias: polar residues.

This sequence belongs to the AP2/ERF transcription factor family. ERF subfamily. As to quaternary structure, interacts with MED25. Binds to DPB3-1 in the nucleus during heat-stress. In terms of processing, ubiquitinated by DRIP1 and DRIP2. Ubiquitination probably leads to its subsequent degradation, thus negatively regulating response to drought. In terms of tissue distribution, expressed preferentially in roots and stems, and at a lower level in leaves.

Its subcellular location is the nucleus. Functionally, transcriptional activator that binds specifically to the DNA sequence 5'-[AG]CCGAC-3'. Binding to the C-repeat/DRE element mediates high salinity- and dehydration-inducible transcription. Promotes the expression of heat stress-inducible genes by contributing to the formation of a heat stress-specific transcriptional complex with NF-Y subunits (e.g. DPB3-1, NF-YA2 and NF-YB3) at the promoter of target genes, thus promoting heat tolerance. The polypeptide is Dehydration-responsive element-binding protein 2A (Arabidopsis thaliana (Mouse-ear cress)).